A 199-amino-acid chain; its full sequence is Superoxide dismutase [Mn/Fe] (199 aa).

Fe(3+) contacts are provided by His27, His81, Asp161, and His165. His27, His81, Asp161, and His165 together coordinate Mn(2+).

The protein belongs to the iron/manganese superoxide dismutase family. Homodimer. Mn(2+) is required as a cofactor. Requires Fe(3+) as cofactor.

The enzyme catalyses 2 superoxide + 2 H(+) = H2O2 + O2. Destroys superoxide anion radicals which are normally produced within the cells and which are toxic to biological systems. Catalyzes the dismutation of superoxide anion radicals into O2 and H2O2 by successive reduction and oxidation of the transition metal ion at the active site. The protein is Superoxide dismutase [Mn/Fe] (sodA) of Staphylococcus saprophyticus subsp. saprophyticus (strain ATCC 15305 / DSM 20229 / NCIMB 8711 / NCTC 7292 / S-41).